A 717-amino-acid chain; its full sequence is P-loop NTPase domain-containing protein LPA1 homolog 2 (717 aa).

Disordered stretches follow at residues Lys-235–Thr-259 and His-532–Ser-629. Polar residues-rich tracts occupy residues Val-243–Thr-259 and His-532–Gly-545. Acidic residues predominate over residues Ser-559–Asn-582. The span at Asn-583–Asp-602 shows a compositional bias: basic and acidic residues.

May be not required for the accumulation of phytic acid in seeds. Phytic acid is the primary storage form of phosphorus in cereal grains and other plant seeds. The polypeptide is P-loop NTPase domain-containing protein LPA1 homolog 2 (Arabidopsis thaliana (Mouse-ear cress)).